Consider the following 151-residue polypeptide: Ribosomal RNA large subunit methyltransferase H (151 aa).

Residues L73, G100, and 119–124 (LSKMTM) each bind S-adenosyl-L-methionine.

Belongs to the RNA methyltransferase RlmH family. Homodimer.

It localises to the cytoplasm. It carries out the reaction pseudouridine(1915) in 23S rRNA + S-adenosyl-L-methionine = N(3)-methylpseudouridine(1915) in 23S rRNA + S-adenosyl-L-homocysteine + H(+). Specifically methylates the pseudouridine at position 1915 (m3Psi1915) in 23S rRNA. This chain is Ribosomal RNA large subunit methyltransferase H, found in Campylobacter concisus (strain 13826).